A 103-amino-acid polypeptide reads, in one-letter code: N(4)-acetylcytidine amidohydrolase (103 aa).

The ASCH domain maps to 6–101; sequence ITFFQRFQDD…QTQFYVIEFK (96 aa). The Proton acceptor role is filled by lysine 21. Residue threonine 24 is the Nucleophile of the active site. Glutamate 74 functions as the Proton donor in the catalytic mechanism.

The protein belongs to the N(4)-acetylcytidine amidohydrolase family.

It catalyses the reaction N(4)-acetylcytidine + H2O = cytidine + acetate + H(+). It carries out the reaction N(4)-acetyl-2'-deoxycytidine + H2O = 2'-deoxycytidine + acetate + H(+). The enzyme catalyses N(4)-acetylcytosine + H2O = cytosine + acetate + H(+). Functionally, catalyzes the hydrolysis of N(4)-acetylcytidine (ac4C). The sequence is that of N(4)-acetylcytidine amidohydrolase (yqfB) from Escherichia fergusonii (strain ATCC 35469 / DSM 13698 / CCUG 18766 / IAM 14443 / JCM 21226 / LMG 7866 / NBRC 102419 / NCTC 12128 / CDC 0568-73).